Consider the following 149-residue polypeptide: Transcriptional regulator MraZ (149 aa).

SpoVT-AbrB domains follow at residues 6 to 52 and 81 to 124; these read RSYR…TPED and VEEL…SEEE.

The protein belongs to the MraZ family. Forms oligomers.

It is found in the cytoplasm. The protein localises to the nucleoid. The polypeptide is Transcriptional regulator MraZ (Oleidesulfovibrio alaskensis (strain ATCC BAA-1058 / DSM 17464 / G20) (Desulfovibrio alaskensis)).